The following is a 418-amino-acid chain: Serine protease inhibitor A3N (418 aa).

A signal peptide spans Met-1–Asp-29. Ser-93 bears the Phosphoserine mark. Residues Asn-104, Asn-258, and Asn-269 are each glycosylated (N-linked (GlcNAc...) asparagine). The interval Gly-367–Arg-394 is RCL.

The protein belongs to the serpin family. N-glycosylated. As to expression, liver.

Its subcellular location is the secreted. The polypeptide is Serine protease inhibitor A3N (Serpina3n) (Rattus norvegicus (Rat)).